Reading from the N-terminus, the 505-residue chain is DNA repair protein RadA (505 aa).

The C4-type zinc finger occupies 10–27 (CSACGADHAQWFGRCPKC). 107-114 (GDPGIGKS) is a binding site for ATP. The RadA KNRFG motif motif lies at 281–285 (KNRFG). A lon-protease-like region spans residues 380-505 (DAYLSVAGGL…KIEEDLGKKD (126 aa)). Residues 485–505 (NTTDQGNGSEAKIEEDLGKKD) are disordered. Residues 495–505 (AKIEEDLGKKD) are compositionally biased toward basic and acidic residues.

It belongs to the RecA family. RadA subfamily.

Its function is as follows. DNA-dependent ATPase involved in processing of recombination intermediates, plays a role in repairing DNA breaks. Stimulates the branch migration of RecA-mediated strand transfer reactions, allowing the 3' invading strand to extend heteroduplex DNA faster. Binds ssDNA in the presence of ADP but not other nucleotides, has ATPase activity that is stimulated by ssDNA and various branched DNA structures, but inhibited by SSB. Does not have RecA's homology-searching function. This Synechocystis sp. (strain ATCC 27184 / PCC 6803 / Kazusa) protein is DNA repair protein RadA.